Consider the following 731-residue polypeptide: 1,4-alpha-glucan branching enzyme GlgB (731 aa).

D411 (nucleophile) is an active-site residue. E464 functions as the Proton donor in the catalytic mechanism.

This sequence belongs to the glycosyl hydrolase 13 family. GlgB subfamily. Monomer.

The enzyme catalyses Transfers a segment of a (1-&gt;4)-alpha-D-glucan chain to a primary hydroxy group in a similar glucan chain.. It functions in the pathway glycan biosynthesis; glycogen biosynthesis. Functionally, catalyzes the formation of the alpha-1,6-glucosidic linkages in glycogen by scission of a 1,4-alpha-linked oligosaccharide from growing alpha-1,4-glucan chains and the subsequent attachment of the oligosaccharide to the alpha-1,6 position. The chain is 1,4-alpha-glucan branching enzyme GlgB from Mycobacterium tuberculosis (strain ATCC 25177 / H37Ra).